Here is a 211-residue protein sequence, read N- to C-terminus: Uracil phosphoribosyltransferase (211 aa).

30 to 34 lines the GTP pocket; sequence KGLVR. 5-phospho-alpha-D-ribose 1-diphosphate is bound by residues arginine 79, arginine 104, and 133–141; that span reads DPMLATGIT. Uracil-binding positions include isoleucine 197 and 202 to 204; that span reads GDA. Aspartate 203 lines the 5-phospho-alpha-D-ribose 1-diphosphate pocket.

It belongs to the UPRTase family. It depends on Mg(2+) as a cofactor.

The enzyme catalyses UMP + diphosphate = 5-phospho-alpha-D-ribose 1-diphosphate + uracil. The protein operates within pyrimidine metabolism; UMP biosynthesis via salvage pathway; UMP from uracil: step 1/1. Its activity is regulated as follows. Allosterically activated by GTP. Catalyzes the conversion of uracil and 5-phospho-alpha-D-ribose 1-diphosphate (PRPP) to UMP and diphosphate. This is Uracil phosphoribosyltransferase from Pyrobaculum islandicum (strain DSM 4184 / JCM 9189 / GEO3).